A 720-amino-acid polypeptide reads, in one-letter code: DNA replication licensing factor mcm7-A (720 aa).

The C4-type zinc finger occupies C183 to C210. Positions F331 to T537 constitute an MCM domain. ATP contacts are provided by Y344, G383, A385, K386, S387, N488, R513, and R603. An Arginine finger motif is present at residues S512–D515.

It belongs to the MCM family. Component of the mcm2-7 complex (RLF-M). The complex forms a toroidal hexameric ring with the proposed subunit order mcm2-mcm6-mcm4-mcm7-mcm3-mcm5. The heterodimer of mmcm3/mcm5 interacts with mcm4, mmcm6, mcm7 and weakly with mcm2. The N-terminus is required for interaction with mmcm3, though this interaction may not be direct, and remains in a complex with mmcm3 throughout the cell cycle. Begins to associate with zmcm6 at the neurula stage. Component of the replisome complex. Component of the CMG helicase complex, composed of the mcm2-7 complex, the GINS complex and cdc45. Post-translationally, ubiquitinated by traip when forks converge following formation of DNA interstrand cross-links. Ubiquitinated via 'Lys-6'- and 'Lys-63'-linked polyubiquitination by traip. Short ubiquitin chains on mcm7 promote recruitment of DNA glycosylase neil3. If the interstrand cross-link cannot be cleaved by neil3, the ubiquitin chains continue to grow on mcm7, promoting the unloading of the CMG helicase complex by the vcp/p97 ATPase.

It localises to the nucleus. The protein localises to the chromosome. The enzyme catalyses ATP + H2O = ADP + phosphate + H(+). Functionally, acts as a component of the mcm2-7 complex (mcm complex) which is the putative replicative helicase essential for 'once per cell cycle' DNA replication initiation and elongation in eukaryotic cells. The active ATPase sites in the mcm2-7 ring are formed through the interaction surfaces of two neighboring subunits such that a critical structure of a conserved arginine finger motif is provided in trans relative to the ATP-binding site of the Walker A box of the adjacent subunit. The six ATPase active sites, however, are likely to contribute differentially to the complex helicase activity. The existence of maternal and zygotic forms of mcm3 and mcm6 suggests that specific forms of mcm2-7 complexes may be used during different stages of development. This chain is DNA replication licensing factor mcm7-A (mcm7-a), found in Xenopus laevis (African clawed frog).